The chain runs to 336 residues: 3-isopropylmalate dehydrogenase (336 aa).

The substrate site is built by arginine 87, arginine 97, arginine 121, and aspartate 211. Mg(2+)-binding residues include aspartate 211, aspartate 235, and aspartate 239. Residue glycine 271–aspartate 283 coordinates NAD(+).

The protein belongs to the isocitrate and isopropylmalate dehydrogenases family. LeuB type 2 subfamily. Homodimer. Mg(2+) is required as a cofactor. Requires Mn(2+) as cofactor.

It localises to the cytoplasm. It carries out the reaction (2R,3S)-3-isopropylmalate + NAD(+) = 4-methyl-2-oxopentanoate + CO2 + NADH. Its pathway is amino-acid biosynthesis; L-leucine biosynthesis; L-leucine from 3-methyl-2-oxobutanoate: step 3/4. Functionally, catalyzes the oxidation of 3-carboxy-2-hydroxy-4-methylpentanoate (3-isopropylmalate) to 3-carboxy-4-methyl-2-oxopentanoate. The product decarboxylates to 4-methyl-2 oxopentanoate. The chain is 3-isopropylmalate dehydrogenase from Mycolicibacterium gilvum (strain PYR-GCK) (Mycobacterium gilvum (strain PYR-GCK)).